We begin with the raw amino-acid sequence, 257 residues long: Acetylglutamate kinase (257 aa).

Substrate is bound by residues 43-44 (GG), Arg-65, and Asn-157.

Belongs to the acetylglutamate kinase family. ArgB subfamily.

Its subcellular location is the cytoplasm. The catalysed reaction is N-acetyl-L-glutamate + ATP = N-acetyl-L-glutamyl 5-phosphate + ADP. It participates in amino-acid biosynthesis; L-arginine biosynthesis; N(2)-acetyl-L-ornithine from L-glutamate: step 2/4. Its function is as follows. Catalyzes the ATP-dependent phosphorylation of N-acetyl-L-glutamate. The polypeptide is Acetylglutamate kinase (Pasteurella multocida (strain Pm70)).